Here is a 257-residue protein sequence, read N- to C-terminus: Neurotrophin-3 (257 aa).

The N-terminal stretch at 1-18 (MSILFYMIFLAYLRGIQG) is a signal peptide. Positions 19 to 138 (NSMDQRRLPE…VANRTARRKR (120 aa)) are excised as a propeptide. The segment at 61–81 (STLPKAEAPREPERGEPAKSE) is disordered. Basic and acidic residues predominate over residues 67–79 (EAPREPERGEPAK). An N-linked (GlcNAc...) asparagine glycan is attached at Asn-131. 3 disulfides stabilise this stretch: Cys-152–Cys-217, Cys-195–Cys-246, and Cys-205–Cys-248.

This sequence belongs to the NGF-beta family.

It is found in the secreted. Functionally, seems to promote the survival of visceral and proprioceptive sensory neurons. This is Neurotrophin-3 (NTF3) from Sus scrofa (Pig).